A 1207-amino-acid polypeptide reads, in one-letter code: MPDMLEQTNALLAALKKPSTNVDQRLQLFSNVKSNIKHNRVPEECQAPIFECIRIAISATTSATLVSTGFSTLSHFIKRLQLQRETAVITSQSSKLCALLLEKLGDARESHRSASLQILADLHPLCPLEVETLIHNAMKGTNARAKDTSMTWVVKMNQTENLPFRAYSAQMIANLEDADAGVRDTAKHAVVDLFTSAPEHAKANLKKQLVSTNVRKAIATYITAHLDGAATGGAHEEMPPPPPAVRERPLPTQRAQTLQPDHGIADALAAEQPPPTEAVTMDPIHIYTQRELEDIFRDMAPPFEGRESEGNWLARDKNTTKLRRILMGNAPAEFPGAFVAGIKSLLEGILKVANTLRTTMSTNGCQLVQELAKTLRHAIDPWVEILLQCFIKMCAATKNIAAQNGNVTVEAIISNVSYNNRILQHVSFAATNALRASWVKTLIRKHKAHVEHSGGLDTLEKIIRKGVTDANPKVREAYRSTYWTFALVWPQRAEAMFETLEKREKTALEKDPNNPNASLASSQSSAVSSFSKSVGAGAARNALKEKIAEQRRAKMAASKVPERPMSAAATYSPVKSASTKSLSARTASTASTASNGPARPPSAMSGESTKSALKNSSGTGSLMSGTVRRPIRRPELNRPATADPYAVRRAGNGKTTPSMTPEKTPAVTTTKKSVAPKSSVRPRAQTQNSPNVSPIRSRSRLGQSTTVQKTASASSRQASPAPSASKDEDLELTIVKPFVRSQSHHDPGTIPFRQRNGLDKSAVFDNETVLSGDEDNFTMVIPNLARPTAQSIHHTPPKTHSPSHLSAPSPRASMLRSPKSMGDINGFGFRSSTRSPRVRSPDRPSTRGTDAQEGVQVFEDPFVGDEPAAVEHEVEKPVLGELPINEKNIERRPSNESISSDTVMGNASEDRPRGHHKTTSTGSVLYSESNDTNNAEVLKNRQLLASGIKKIESRTVESHMFRRMQDMIRSNHEIWGANDENFGCLLLACLDFLEVPTEELKTTPIKVANLKVQALATIRAMLSLYRKETAKYFSRVLCTVLQTKAQYENTSHIAIDLETTAEEIVRYGQTSDCLNAVLALIEDLPSSTPTSSPSSKSSLTSLPGAGQTRTATMALSTLAALIQISGAKNITLSPDQTSRLGKLAVRCMDDQDADVRKSNIEFCIALHERIAAPAGEQENDGFWRAVAGAREQHLNLLTYYLAKRRAA.

Disordered regions lie at residues 504-525 (EKTA…SQSS), 549-730 (EQRR…DEDL), 789-856 (AQSI…EGVQ), 869-928 (AVEH…LYSE), and 1086-1105 (SSTP…LPGA). Residues 576-594 (SASTKSLSARTASTASTAS) are compositionally biased toward low complexity. Polar residues-rich tracts occupy residues 605 to 624 (SGES…SLMS), 653 to 672 (GKTT…TTKK), and 684 to 710 (AQTQ…VQKT). Low complexity-rich tracts occupy residues 711–724 (ASAS…APSA) and 791–806 (SIHH…SHLS). Over residues 869–878 (AVEHEVEKPV) the composition is skewed to basic and acidic residues. Polar residues-rich tracts occupy residues 895 to 905 (NESISSDTVMG) and 919 to 928 (TSTGSVLYSE).

The protein belongs to the CLASP family. Interacts with microtubules.

It is found in the cytoplasm. It localises to the cytoskeleton. The protein localises to the nucleus. Its subcellular location is the spindle. Microtubule binding protein that promotes the stabilization of dynamic microtubules. Required for mitotic spindle formation. In Phaeosphaeria nodorum (strain SN15 / ATCC MYA-4574 / FGSC 10173) (Glume blotch fungus), this protein is Protein STU1 (STU1).